A 353-amino-acid polypeptide reads, in one-letter code: ATP-dependent kinase YFH7 (353 aa).

31 to 39 contributes to the ATP binding site; sequence GSPGSGKST.

It belongs to the YFH7 family.

Functionally, ATP-dependent kinase that could be involved in endoplasmic reticulum membrane assembly. In Saccharomyces cerevisiae (strain RM11-1a) (Baker's yeast), this protein is ATP-dependent kinase YFH7 (YFH7).